A 242-amino-acid chain; its full sequence is Ribonuclease PH (242 aa).

Residues R89 and 127–129 each bind phosphate; that span reads GTR.

Belongs to the RNase PH family. In terms of assembly, homohexameric ring arranged as a trimer of dimers.

It carries out the reaction tRNA(n+1) + phosphate = tRNA(n) + a ribonucleoside 5'-diphosphate. In terms of biological role, phosphorolytic 3'-5' exoribonuclease that plays an important role in tRNA 3'-end maturation. Removes nucleotide residues following the 3'-CCA terminus of tRNAs; can also add nucleotides to the ends of RNA molecules by using nucleoside diphosphates as substrates, but this may not be physiologically important. Probably plays a role in initiation of 16S rRNA degradation (leading to ribosome degradation) during starvation. In Neisseria meningitidis serogroup A / serotype 4A (strain DSM 15465 / Z2491), this protein is Ribonuclease PH.